Consider the following 83-residue polypeptide: Cobrotoxin (83 aa).

The first 21 residues, 1–21, serve as a signal peptide directing secretion; it reads MKTLLLTLLVVTIVCLDLGYT. 4 disulfides stabilise this stretch: Cys-24/Cys-45, Cys-38/Cys-62, Cys-64/Cys-75, and Cys-76/Cys-81.

Belongs to the three-finger toxin family. Short-chain subfamily. Type I alpha-neurotoxin sub-subfamily. In terms of tissue distribution, expressed by the venom gland.

It is found in the secreted. In terms of biological role, binds to muscle nicotinic acetylcholine receptor (nAChR) and inhibit acetylcholine from binding to the receptor, thereby impairing neuromuscular transmission. Has a higher toxicity than cobrotoxin-b. In vivo, when tested on rat arthritis models, shows anti-inflammation and immunosuppression effects. The chain is Cobrotoxin from Naja atra (Chinese cobra).